We begin with the raw amino-acid sequence, 88 residues long: Elongation factor 1-beta (88 aa).

It belongs to the EF-1-beta/EF-1-delta family.

In terms of biological role, promotes the exchange of GDP for GTP in EF-1-alpha/GDP, thus allowing the regeneration of EF-1-alpha/GTP that could then be used to form the ternary complex EF-1-alpha/GTP/AAtRNA. This Methanosphaera stadtmanae (strain ATCC 43021 / DSM 3091 / JCM 11832 / MCB-3) protein is Elongation factor 1-beta.